A 71-amino-acid polypeptide reads, in one-letter code: Pseudonajatoxin b (71 aa).

Cystine bridges form between Cys-3/Cys-21, Cys-14/Cys-42, Cys-27/Cys-31, Cys-46/Cys-58, and Cys-59/Cys-64.

Belongs to the three-finger toxin family. Long-chain subfamily. Type II alpha-neurotoxin sub-subfamily. In terms of tissue distribution, expressed by the venom gland.

The protein localises to the secreted. In terms of biological role, binds with high affinity to muscular (alpha-1/CHRNA1) and neuronal (alpha-7/CHRNA7) nicotinic acetylcholine receptor (nAChR) and inhibits acetylcholine from binding to the receptor, thereby impairing neuromuscular and neuronal transmission. The polypeptide is Pseudonajatoxin b (Pseudonaja textilis (Eastern brown snake)).